The primary structure comprises 415 residues: 3-isopropylmalate dehydratase large subunit (415 aa).

Positions 297, 355, and 358 each coordinate [4Fe-4S] cluster.

Belongs to the aconitase/IPM isomerase family. LeuC type 2 subfamily. Heterodimer of LeuC and LeuD. [4Fe-4S] cluster is required as a cofactor.

It catalyses the reaction (2R,3S)-3-isopropylmalate = (2S)-2-isopropylmalate. It functions in the pathway amino-acid biosynthesis; L-leucine biosynthesis; L-leucine from 3-methyl-2-oxobutanoate: step 2/4. Its function is as follows. Catalyzes the isomerization between 2-isopropylmalate and 3-isopropylmalate, via the formation of 2-isopropylmaleate. This Caldivirga maquilingensis (strain ATCC 700844 / DSM 13496 / JCM 10307 / IC-167) protein is 3-isopropylmalate dehydratase large subunit.